The following is a 353-amino-acid chain: Transcription termination/antitermination protein NusG (353 aa).

The 35-residue stretch at Val-301–Ile-335 folds into the KOW domain.

It belongs to the NusG family.

With respect to regulation, regulated by autoinhibition via interaction of the N-terminal and the C-terminal domains. Autoinhibition may prevent NusG from interacting prematurely with other components of the transcription complex or non-specific interactions with other cellular components. Functionally, participates in transcription elongation, termination and antitermination. The sequence is that of Transcription termination/antitermination protein NusG from Thermotoga maritima (strain ATCC 43589 / DSM 3109 / JCM 10099 / NBRC 100826 / MSB8).